The sequence spans 78 residues: Acyl carrier protein (78 aa).

The Carrier domain maps to 2–77; it reads SDIASRVKAI…QAISYIEEAK (76 aa). Ser37 is subject to O-(pantetheine 4'-phosphoryl)serine.

It belongs to the acyl carrier protein (ACP) family. In terms of processing, 4'-phosphopantetheine is transferred from CoA to a specific serine of apo-ACP by AcpS. This modification is essential for activity because fatty acids are bound in thioester linkage to the sulfhydryl of the prosthetic group.

The protein resides in the cytoplasm. It functions in the pathway lipid metabolism; fatty acid biosynthesis. Its function is as follows. Carrier of the growing fatty acid chain in fatty acid biosynthesis. This is Acyl carrier protein from Flavobacterium johnsoniae (strain ATCC 17061 / DSM 2064 / JCM 8514 / BCRC 14874 / CCUG 350202 / NBRC 14942 / NCIMB 11054 / UW101) (Cytophaga johnsonae).